Reading from the N-terminus, the 219-residue chain is uncharacterized protein (219 aa).

Residue Asp58 is part of the active site.

Belongs to the pseudouridine synthase RluA family.

It catalyses the reaction a uridine in RNA = a pseudouridine in RNA. This is an uncharacterized protein from Zymomonas mobilis subsp. mobilis (strain ATCC 31821 / ZM4 / CP4).